A 291-amino-acid chain; its full sequence is N-acetylmannosamine kinase (291 aa).

ATP-binding positions include 5-12 (AIDIGGTK) and 132-139 (GVGGGVVS). 4 residues coordinate Zn(2+): His156, Cys166, Cys168, and Cys173.

The protein belongs to the ROK (NagC/XylR) family. NanK subfamily. Homodimer.

It catalyses the reaction an N-acyl-D-mannosamine + ATP = an N-acyl-D-mannosamine 6-phosphate + ADP + H(+). The protein operates within amino-sugar metabolism; N-acetylneuraminate degradation; D-fructose 6-phosphate from N-acetylneuraminate: step 2/5. Its function is as follows. Catalyzes the phosphorylation of N-acetylmannosamine (ManNAc) to ManNAc-6-P. This Escherichia coli O6:H1 (strain CFT073 / ATCC 700928 / UPEC) protein is N-acetylmannosamine kinase (nanK1).